Here is a 209-residue protein sequence, read N- to C-terminus: Glutathione S-transferase 1-1 (209 aa).

Residues 1 to 81 (MADFYYLPGS…YLVEKYGKTD (81 aa)) enclose the GST N-terminal domain. Glutathione is bound by residues S10, 51–53 (HTI), and 65–67 (ESR). One can recognise a GST C-terminal domain in the interval 87-209 (CPKKRAVINQ…GCLEFKKYFE (123 aa)).

It belongs to the GST superfamily. Theta family. As to quaternary structure, homodimer.

The enzyme catalyses RX + glutathione = an S-substituted glutathione + a halide anion + H(+). The catalysed reaction is 1,1,1-trichloro-2,2-bis(4-chlorophenyl)ethane = 1,1-dichloro-2,2-bis(4-chlorophenyl)ethylene + chloride + H(+). In terms of biological role, conjugation of reduced glutathione to a wide number of exogenous and endogenous hydrophobic electrophiles. Has DDT dehydrochlorinase activity. The protein is Glutathione S-transferase 1-1 (GstD1) of Drosophila simulans (Fruit fly).